The following is a 597-amino-acid chain: uncharacterized protein (597 aa).

The Helicase ATP-binding domain maps to 48–198 (LHPYNPYSSL…DSILSLTKET (151 aa)). 61 to 68 (YDVGLGKT) is a binding site for ATP. A DEVH box motif is present at residues 146-149 (DEVH). Residues 275-467 (KINAFINSIK…DIPKIDNEMV (193 aa)) enclose the Helicase C-terminal domain.

Belongs to the helicase family.

Its function is as follows. The presence of the two linear plasmids, termed pGKL1 and pGKL2, in strains of Kluyveromyces lactis confers the killer phenotype to the host cell, by promoting the secretion of a toxin able to inhibit the growth of sensitive strains. This is an uncharacterized protein from Kluyveromyces lactis (strain ATCC 8585 / CBS 2359 / DSM 70799 / NBRC 1267 / NRRL Y-1140 / WM37) (Yeast).